The chain runs to 337 residues: Protein BIG GRAIN 1-like (337 aa).

Disordered regions lie at residues 1–32, 120–163, and 179–233; these read MRDM…PSFS, SAAG…RPAS, and KRPS…ARPS. Basic and acidic residues predominate over residues 137–146; the sequence is HEQPDVEKTA. Low complexity-rich tracts occupy residues 150 to 163, 195 to 209, and 219 to 230; these read PGSA…RPAS, PACS…SSYA, and RTPPTTTTTARA.

It belongs to the BIG GRAIN 1 (BG1) plant protein family.

The protein localises to the cell membrane. Its function is as follows. Involved in auxin transport. Regulator of the auxin signaling pathway. This Oryza sativa subsp. indica (Rice) protein is Protein BIG GRAIN 1-like.